We begin with the raw amino-acid sequence, 590 residues long: Phosphate-repressible phosphate permease pho-4 (590 aa).

8 consecutive transmembrane segments (helical) span residues F6–A26, Y44–A64, A85–A105, I118–V138, V149–L169, F186–W206, I220–M240, and I246–L266. Over R267 to D466 the chain is Cytoplasmic. Residues A297–R361 form a disordered region. A compositionally biased stretch (polar residues) spans V313–A322. Basic and acidic residues predominate over residues D325–E345. The next 4 membrane-spanning stretches (helical) occupy residues V467–G487, G506–L525, V527–W547, and G561–I581.

Belongs to the inorganic phosphate transporter (PiT) (TC 2.A.20) family.

It is found in the cell membrane. Phosphate transport activity is competitively inhibited by vanadate and arsenate. High-affinity transporter for external inorganic phosphate. Acts probably as a sodium-phosphate symporter. Component of the high affinity phosphate transport system II (ptsII) necessary for scavenging phosphorus from the environment under conditions of limiting phosphorus. This is Phosphate-repressible phosphate permease pho-4 from Neurospora crassa (strain ATCC 24698 / 74-OR23-1A / CBS 708.71 / DSM 1257 / FGSC 987).